The chain runs to 722 residues: Ribosomal RNA large subunit methyltransferase K/L (722 aa).

Positions 43-154 constitute a THUMP domain; it reads IGLRACLWSR…GNEGRVGIDL (112 aa).

This sequence belongs to the methyltransferase superfamily. RlmKL family.

It localises to the cytoplasm. It catalyses the reaction guanosine(2445) in 23S rRNA + S-adenosyl-L-methionine = N(2)-methylguanosine(2445) in 23S rRNA + S-adenosyl-L-homocysteine + H(+). It carries out the reaction guanosine(2069) in 23S rRNA + S-adenosyl-L-methionine = N(2)-methylguanosine(2069) in 23S rRNA + S-adenosyl-L-homocysteine + H(+). Functionally, specifically methylates the guanine in position 2445 (m2G2445) and the guanine in position 2069 (m7G2069) of 23S rRNA. The protein is Ribosomal RNA large subunit methyltransferase K/L of Magnetococcus marinus (strain ATCC BAA-1437 / JCM 17883 / MC-1).